Reading from the N-terminus, the 759-residue chain is MERGAERGPPPAPGGVALRGQPAGGCGPWEMRDRLGTGGFGNVCLYQHQDTGARVAIKSCRLELSVKNKDRWCHEIDIMKKLNHPNVVRACEVPEEMNFLVNDVPLLAMEYCSGGDLRKLLNKPENCCGLKESQILSLLSDIGSGIQYLHENRIIHRDLKPENIVLQDEGGKIIHKIIDLGYAKDLDQGSLCTSFVGTLQYLAPELFENKSYSVTVDYWSFGTMVFECIAGFRPFLHNLQPFTWHEKIKKKDPKHIFASEEMNGEVRFSTHLPQPHSICSLIVEPMESWLQLMLNWDPEQRGGGLDPETNSPKCFLLMDHILNLKIVHILNMTSAKIVSFLLHPEESLHFLQNRIESETGISTGNQELLLETGICLDPRKPASQCVIDGVRGWDSYMVYLFDKSKTVYDGPFASRSLSECVNYIVQDSKIQLPIPQLRKVWAEAVHYVIGLKEDYSRLFQGQRAAMLSLLRYNANLIKMKNNMVSASQQLKAKLEFFHQSIRLDLERYSDQMAYGISSEKMLKAWKEMEEKASHCAQAEDIGYLDEQIMALHTEIVELQKSPYARRQGEVMESLEQRAIDLYKQLKTRPPDHAYSDSTDMVKIIVQTVQSQDRVLKELFGHLSKLLGCKQKIIDLLPKIEVALNNIKEADNSEMQMQGKRQREIWHLLKIACTQSSSRSLVSSSLEGTASTPAATWVPQSSSEYAPHPLSSMATPGDGENFVDVIEENLNYLDRFSSMLQEAREEQNNSLTNFDWSWLK.

Residues 1–20 (MERGAERGPPPAPGGVALRG) form a disordered region. The Protein kinase domain occupies 29–316 (WEMRDRLGTG…PETNSPKCFL (288 aa)). ATP is bound by residues 35–43 (LGTGGFGNV) and Lys58. Asp158 acts as the Proton acceptor in catalysis. The interval 469–490 (LLRYNANLIKMKNNMVSASQQL) is leucine-zipper. The span at 691 to 703 (TPAATWVPQSSSE) shows a compositional bias: polar residues. Residues 691–715 (TPAATWVPQSSSEYAPHPLSSMATP) are disordered. The NEMO-binding stretch occupies residues 753-758 (FDWSWL).

The protein belongs to the protein kinase superfamily. Ser/Thr protein kinase family. I-kappa-B kinase subfamily.

It localises to the cytoplasm. It is found in the nucleus. The catalysed reaction is L-seryl-[I-kappa-B protein] + ATP = O-phospho-L-seryl-[I-kappa-B protein] + ADP + H(+). With respect to regulation, activated when phosphorylated and inactivated when dephosphorylated. In terms of biological role, phosphorylates inhibitors of NF-kappa-B thus leading to the dissociation of the inhibitor/NF-kappa-B complex and ultimately the degradation of the inhibitor. Phosphorylates 'Ser-10' of histone H3 at NF-kappa-B-regulated promoters during inflammatory responses triggered by cytokines. This is Inhibitor of nuclear factor kappa-B kinase subunit alpha (CHUK) from Gallus gallus (Chicken).